A 504-amino-acid polypeptide reads, in one-letter code: Anaerobic nitric oxide reductase transcription regulator NorR (504 aa).

At Asp57 the chain carries 4-aspartylphosphate. The 230-residue stretch at 187–416 folds into the Sigma-54 factor interaction domain; sequence MIGLSPGMTQ…LEHAIHRAVV (230 aa). Residues 215-222 and 278-287 contribute to the ATP site; these read GETGTGKE and ADNGTLFLDE. Residues 479 to 498 constitute a DNA-binding region (H-T-H motif); the sequence is WAACARMLETDVANLHRLAK.

Its pathway is nitrogen metabolism; nitric oxide reduction. Required for the expression of anaerobic nitric oxide (NO) reductase, acts as a transcriptional activator for at least the norVW operon. Activation also requires sigma-54. The chain is Anaerobic nitric oxide reductase transcription regulator NorR from Escherichia coli O139:H28 (strain E24377A / ETEC).